The following is a 290-amino-acid chain: Forkhead box protein O3B (290 aa).

Disordered regions lie at residues 1–30 and 44–239; these read METDLAEMPEKGVLSSQDSPHFQEKSTEEG and AAAA…SSRR. Composition is skewed to low complexity over residues 44-59 and 75-91; these read AAAAAAPGSRSLRGVH and RTPAAAGRAAKMAEAPA. The residue at position 117 (Thr-117) is a Phosphothreonine; by PKB/AKT1. Positions 142-153 are enriched in acidic residues; the sequence is IPEEEDDEDDED. A DNA-binding region (fork-head) is located at residues 242–290; the sequence is WGNLSYADLITRAIESSPDRRLTLSQIYEWMVSCVPYFKDKGNSNSSAG.

It is found in the cytoplasm. The protein resides in the cytosol. In terms of biological role, transcription factor. This chain is Forkhead box protein O3B, found in Homo sapiens (Human).